The sequence spans 159 residues: Galactose-specific lectin nattectin (159 aa).

Residues 1 to 21 form the signal peptide; that stretch reads MASVPHFTVFLFLACALGIGA. A propeptide spanning residues 22–24 is cleaved from the precursor; it reads NVT. Cystine bridges form between C31–C42, C59–C155, and C132–C147. The region spanning 38–156 is the C-type lectin domain; sequence HGSRCFTFHR…CKVKRSFLCA (119 aa). Residues Q122, D124, E130, and N143 each coordinate Ca(2+). The short motif at 122–124 is the Galactose-binding element; sequence QPD.

As to quaternary structure, monomer. In terms of processing, not glycosylated. In terms of tissue distribution, expressed by the venom gland.

It is found in the secreted. In terms of biological role, galactose specific lectin that exhibits hemagglutination activity (minimum hemagluttination concentration = 2.5 ug/well) in a calcium-independent fashion. Has remarkable pro-inflammatory activity, inducing neutrophil mobilization in mice. Plays a crucial role in the innate immune system and chronic manifestations, especially in neutrophil mobilization. The chain is Galactose-specific lectin nattectin from Thalassophryne nattereri (Copper Joe toadfish).